Consider the following 303-residue polypeptide: N-acetyl-D-glucosamine kinase (303 aa).

ATP is bound by residues 4 to 11 (GFDIGGTK) and 133 to 140 (GVGGGLVL). Residues His157, Cys177, Cys179, and Cys184 each coordinate Zn(2+).

It belongs to the ROK (NagC/XylR) family. NagK subfamily.

It catalyses the reaction N-acetyl-D-glucosamine + ATP = N-acetyl-D-glucosamine 6-phosphate + ADP + H(+). Its pathway is cell wall biogenesis; peptidoglycan recycling. Its function is as follows. Catalyzes the phosphorylation of N-acetyl-D-glucosamine (GlcNAc) derived from cell-wall degradation, yielding GlcNAc-6-P. The protein is N-acetyl-D-glucosamine kinase of Salmonella arizonae (strain ATCC BAA-731 / CDC346-86 / RSK2980).